Here is a 248-residue protein sequence, read N- to C-terminus: 5'-nucleotidase SurE (248 aa).

A divalent metal cation contacts are provided by Asp8, Asp9, Ser39, and Asn91.

The protein belongs to the SurE nucleotidase family. The cofactor is a divalent metal cation.

Its subcellular location is the cytoplasm. The catalysed reaction is a ribonucleoside 5'-phosphate + H2O = a ribonucleoside + phosphate. Nucleotidase that shows phosphatase activity on nucleoside 5'-monophosphates. This is 5'-nucleotidase SurE from Neisseria meningitidis serogroup C / serotype 2a (strain ATCC 700532 / DSM 15464 / FAM18).